Consider the following 343-residue polypeptide: Aldehyde reductase 2 (343 aa).

An NADP(+)-binding site is contributed by Y177.

This sequence belongs to the NAD(P)-dependent epimerase/dehydratase family. Dihydroflavonol-4-reductase subfamily. In terms of assembly, monomer.

The catalysed reaction is a primary alcohol + NADP(+) = an aldehyde + NADPH + H(+). Inhibited by quercetin and diphenylhydantoin. Its function is as follows. Catalyzes the asymmetric reduction of o-substituted aliphatic and aromatic aldehydes and ketones to an S-enantiomer. Reduces ethyl 4-chloro-3-oxobutanoate to ethyl (S)-4-chloro-3-hydroxybutanoate. The chain is Aldehyde reductase 2 from Sporidiobolus salmonicolor (Yeast-like fungus).